The sequence spans 334 residues: Heme A synthase (334 aa).

5 consecutive transmembrane segments (helical) span residues isoleucine 6 to isoleucine 26, glycine 93 to isoleucine 113, leucine 119 to valine 139, leucine 154 to lysine 174, and leucine 189 to valine 209. Residue histidine 253 coordinates heme. 3 consecutive transmembrane segments (helical) span residues leucine 255 to lysine 275, isoleucine 282 to valine 302, and valine 305 to isoleucine 325. Histidine 313 contributes to the heme binding site.

The protein belongs to the COX15/CtaA family. Type 2 subfamily. In terms of assembly, interacts with CtaB. It depends on heme b as a cofactor.

It is found in the cell membrane. The catalysed reaction is Fe(II)-heme o + 2 A + H2O = Fe(II)-heme a + 2 AH2. Its pathway is porphyrin-containing compound metabolism; heme A biosynthesis; heme A from heme O: step 1/1. Functionally, catalyzes the conversion of heme O to heme A by two successive hydroxylations of the methyl group at C8. The first hydroxylation forms heme I, the second hydroxylation results in an unstable dihydroxymethyl group, which spontaneously dehydrates, resulting in the formyl group of heme A. The protein is Heme A synthase of Rickettsia prowazekii (strain Madrid E).